The chain runs to 153 residues: MVFEGHLVGTGLKVGVVVGRFNEFITSKLLGGALDGLKRHGVEESDIDVAWVPGAFEIPLIAKKMASSGKYDAVITLGTVIRGATTHYDYVCNEVAKGVASLSLQMDIPVIFGVLTTETIEQAIERAGTKAGNKGYESAVAAIEMAHLSKQWA.

Residues F21, A55–E57, and T79–I81 each bind 5-amino-6-(D-ribitylamino)uracil. A84–T85 provides a ligand contact to (2S)-2-hydroxy-3-oxobutyl phosphate. The active-site Proton donor is the H87. F112 contributes to the 5-amino-6-(D-ribitylamino)uracil binding site. Position 126 (R126) interacts with (2S)-2-hydroxy-3-oxobutyl phosphate.

It belongs to the DMRL synthase family. In terms of assembly, forms an icosahedral capsid composed of 60 subunits, arranged as a dodecamer of pentamers.

The enzyme catalyses (2S)-2-hydroxy-3-oxobutyl phosphate + 5-amino-6-(D-ribitylamino)uracil = 6,7-dimethyl-8-(1-D-ribityl)lumazine + phosphate + 2 H2O + H(+). It functions in the pathway cofactor biosynthesis; riboflavin biosynthesis; riboflavin from 2-hydroxy-3-oxobutyl phosphate and 5-amino-6-(D-ribitylamino)uracil: step 1/2. Catalyzes the formation of 6,7-dimethyl-8-ribityllumazine by condensation of 5-amino-6-(D-ribitylamino)uracil with 3,4-dihydroxy-2-butanone 4-phosphate. This is the penultimate step in the biosynthesis of riboflavin. The polypeptide is 6,7-dimethyl-8-ribityllumazine synthase (Bacillus cereus (strain B4264)).